The sequence spans 493 residues: N-acetylglucosamine kinase 1 (493 aa).

Residues 27–490 (ESSVLSSIVE…SIIGAAIGAA (464 aa)) enclose the Hexokinase domain. Residues 79-221 (TGDEHGQYLV…GLTLDVQSIL (143 aa)) are hexokinase small subdomain. A hexokinase large subdomain region spans residues 222 to 479 (NDSLAVYSAG…IKVDLKLIEN (258 aa)).

Belongs to the hexokinase family. Interacts with histone deacetylase SIR2 under filamentation-inducing conditions.

Its subcellular location is the cytoplasm. The protein localises to the nucleus. It is found in the mitochondrion. The catalysed reaction is N-acetyl-D-glucosamine + ATP = N-acetyl-D-glucosamine 6-phosphate + ADP + H(+). The enzyme catalyses D-mannose + ATP = D-mannose 6-phosphate + ADP + H(+). It carries out the reaction D-glucose + ATP = D-glucose 6-phosphate + ADP + H(+). It catalyses the reaction D-glucosamine + ATP = D-glucosamine 6-phosphate + ADP + H(+). The protein operates within carbohydrate metabolism; hexose metabolism. Its pathway is carbohydrate degradation; glycolysis; D-glyceraldehyde 3-phosphate and glycerone phosphate from D-glucose: step 1/4. In terms of biological role, component of the N-acetylglucosamine catabolic cascade that phosphorylates N-acetylglucosamine (GlcNAc), and allows the unique ability to utilise GlcNAc as carbon source. Converts GlcNAc to GlcNAc-6-P. Also able to phosphorylate glucose, glucosamine (GlcN), and mannose. Galactose, fructose, N-acetylmannosamine (ManNAc), mannosamine (ManN), galactosamine (GalN), and N-acetylgalactosamine (GalNAc) are not phosphorylated by HXK1. GlcNAc metabolism is closely associated with virulence and morphogenesis, and is involved in the cell wall synthesis. Acts both as a repressor and an activator of genes involved in maintaining cellular homeostasis. Contributes to white-opaque morphological transition and plays a role as a filamentation repressor. The polypeptide is N-acetylglucosamine kinase 1 (Candida albicans (strain SC5314 / ATCC MYA-2876) (Yeast)).